Here is a 528-residue protein sequence, read N- to C-terminus: Oxamate amidohydrolase proenzyme (528 aa).

Catalysis depends on T342, which acts as the Nucleophile. Substrate is bound at residue 424 to 425 (GG).

This sequence belongs to the gamma-glutamyltransferase family. In terms of assembly, heterodimer that consists of a 35.5 kDa large (alpha) subunit and a 20 kDa small (beta) subunit, which are synthesized from a single polypeptide. Post-translationally, cleaved by autocatalysis into a large (alpha) and a small (beta) subunit.

The enzyme catalyses oxamate + H2O = oxalate + NH4(+). Functionally, involved in the uric acid degradation pathway. Catalyzes the conversion of oxamate to oxalate. This is Oxamate amidohydrolase proenzyme from Klebsiella pneumoniae subsp. pneumoniae (strain ATCC 700721 / MGH 78578).